The chain runs to 297 residues: Myoblast determination protein 1 homolog (297 aa).

Residues 52–76 are disordered; the sequence is KPEEHPHHHGHHHGHPHEEEHVRAP. The bHLH domain maps to 101 to 152; the sequence is DRRKAATMRERRRLSKVNEAFETLKRCTSTNPNQRLPKVEILRNAIRYIESL. 2 disordered regions span residues 171-221 and 243-297; these read SGES…GKSS and CPIL…YQVL. Polar residues-rich tracts occupy residues 174-184 and 258-297; these read SDASSPRSNCS and CSPQ…YQVL.

In terms of assembly, efficient DNA binding requires dimerization with another bHLH protein. Seems to form active heterodimers with ITF-2.

The protein resides in the nucleus. Acts as a transcriptional activator that promotes transcription of muscle-specific target genes and plays a role in muscle differentiation. Induces fibroblasts to differentiate into myoblasts. Interacts with and is inhibited by the twist protein. This interaction probably involves the basic domains of both proteins. The sequence is that of Myoblast determination protein 1 homolog (MYOD1) from Coturnix japonica (Japanese quail).